A 125-amino-acid polypeptide reads, in one-letter code: Large ribosomal subunit protein bL12 (125 aa).

It belongs to the bacterial ribosomal protein bL12 family. In terms of assembly, homodimer. Part of the ribosomal stalk of the 50S ribosomal subunit. Forms a multimeric L10(L12)X complex, where L10 forms an elongated spine to which 2 to 4 L12 dimers bind in a sequential fashion. Binds GTP-bound translation factors.

Functionally, forms part of the ribosomal stalk which helps the ribosome interact with GTP-bound translation factors. Is thus essential for accurate translation. In Azoarcus sp. (strain BH72), this protein is Large ribosomal subunit protein bL12.